Reading from the N-terminus, the 169-residue chain is Centrin-1 (169 aa).

Residues 1-21 (MHSRKGASSLPRGRGAGKKTE) are essential for homooligomerization. The segment at 1–25 (MHSRKGASSLPRGRGAGKKTELTEE) is disordered. 4 EF-hand domains span residues 25 to 60 (EQRQEIKEAFDLFDTDGSGCIDAKELKVAMRALGFE), 61 to 96 (PKKEEIRKMIADVDKDGTGSVDFQEFLSLMTVKMAE), 98 to 133 (DPREEILKAFRLFDDDETGKISFKNLKRVSKELGEN), and 134 to 169 (LTDEELQEMIDEADRDGDGEINEEEFIRIMRKTNLF). Ca(2+) contacts are provided by D38, D40, S42, C44, E49, D74, D76, T78, S80, and E85.

The protein belongs to the centrin family. In terms of assembly, monomer. Homooligomerizes in a Ca(2+)-dependent manner. Interaction via the C-terminus with other proteins disrupts and/or prevents homooligomerization. Interacts with SFI1.

Its subcellular location is the cytoplasm. It is found in the cytoskeleton. The protein localises to the microtubule organizing center. The protein resides in the centrosome. Its function is as follows. Acts as a calcium sensor. Part of the centrosome outer core complex. This Toxoplasma gondii (strain ATCC 50611 / Me49) protein is Centrin-1.